Here is a 70-residue protein sequence, read N- to C-terminus: Small ribosomal subunit protein bS21 (70 aa).

This sequence belongs to the bacterial ribosomal protein bS21 family.

This chain is Small ribosomal subunit protein bS21, found in Nitratiruptor sp. (strain SB155-2).